A 385-amino-acid chain; its full sequence is Lipid-A-disaccharide synthase 2 (385 aa).

It belongs to the LpxB family.

The catalysed reaction is a lipid X + a UDP-2-N,3-O-bis[(3R)-3-hydroxyacyl]-alpha-D-glucosamine = a lipid A disaccharide + UDP + H(+). Its pathway is bacterial outer membrane biogenesis; LPS lipid A biosynthesis. In terms of biological role, condensation of UDP-2,3-diacylglucosamine and 2,3-diacylglucosamine-1-phosphate to form lipid A disaccharide, a precursor of lipid A, a phosphorylated glycolipid that anchors the lipopolysaccharide to the outer membrane of the cell. This chain is Lipid-A-disaccharide synthase 2, found in Legionella pneumophila (strain Paris).